The sequence spans 143 residues: Transcription antitermination protein NusB (143 aa).

This sequence belongs to the NusB family.

In terms of biological role, involved in transcription antitermination. Required for transcription of ribosomal RNA (rRNA) genes. Binds specifically to the boxA antiterminator sequence of the ribosomal RNA (rrn) operons. The sequence is that of Transcription antitermination protein NusB from Dehalococcoides mccartyi (strain CBDB1).